Reading from the N-terminus, the 396-residue chain is Putative pyridoxal phosphate-dependent acyltransferase (396 aa).

A pyridoxal 5'-phosphate-binding site is contributed by 111–112 (GF). Position 136 (H136) interacts with substrate. Pyridoxal 5'-phosphate contacts are provided by residues S186, 211–214 (DDAH), and 241–244 (TLSK). Residue K244 is modified to N6-(pyridoxal phosphate)lysine. Position 358 (T358) interacts with substrate.

The protein belongs to the class-II pyridoxal-phosphate-dependent aminotransferase family. As to quaternary structure, homodimer. Pyridoxal 5'-phosphate is required as a cofactor.

In Bacillus cereus (strain ATCC 14579 / DSM 31 / CCUG 7414 / JCM 2152 / NBRC 15305 / NCIMB 9373 / NCTC 2599 / NRRL B-3711), this protein is Putative pyridoxal phosphate-dependent acyltransferase.